The following is a 216-amino-acid chain: Germin-like protein 1-1 (216 aa).

The signal sequence occupies residues 1–24 (MARVQLWVAAACAVVLALAAPSLA). Cysteines 34 and 49 form a disulfide. N-linked (GlcNAc...) asparagine glycosylation is found at Asn52 and Asn76. Residues 61-209 (AGLKNPGNTN…AFRVDVPQVD (149 aa)) enclose the Cupin type-1 domain. His109, His111, Glu116, and His155 together coordinate Mn(2+).

Belongs to the germin family. Oligomer (believed to be a pentamer but probably hexamer).

The protein localises to the secreted. It is found in the extracellular space. It localises to the apoplast. Functionally, may play a role in plant defense. Probably has no oxalate oxidase activity even if the active site is conserved. The polypeptide is Germin-like protein 1-1 (GER4) (Oryza sativa subsp. japonica (Rice)).